Consider the following 910-residue polypeptide: Protein translocase subunit SecA (910 aa).

ATP is bound by residues Gln86, 104 to 108, and Asp508; that span reads GEGKT. The Zn(2+) site is built by Cys894, Cys896, Cys905, and Cys906.

The protein belongs to the SecA family. In terms of assembly, monomer and homodimer. Part of the essential Sec protein translocation apparatus which comprises SecA, SecYEG and auxiliary proteins SecDF. Other proteins may also be involved. It depends on Zn(2+) as a cofactor.

Its subcellular location is the cell membrane. It is found in the cytoplasm. The catalysed reaction is ATP + H2O + cellular proteinSide 1 = ADP + phosphate + cellular proteinSide 2.. Its function is as follows. Part of the Sec protein translocase complex. Interacts with the SecYEG preprotein conducting channel. Has a central role in coupling the hydrolysis of ATP to the transfer of proteins into and across the cell membrane, serving as an ATP-driven molecular motor driving the stepwise translocation of polypeptide chains across the membrane. In Acetivibrio thermocellus (strain ATCC 27405 / DSM 1237 / JCM 9322 / NBRC 103400 / NCIMB 10682 / NRRL B-4536 / VPI 7372) (Clostridium thermocellum), this protein is Protein translocase subunit SecA.